We begin with the raw amino-acid sequence, 93 residues long: Neutrophil cationic peptide 2 (93 aa).

Residues 1–19 (MRTVPLFAACLLLTLMAQA) form the signal peptide. The propeptide occupies 20-62 (EPLPRAADHSDTKMKGDREDHVAVISFWEEESTSLQDAGAGAG). 3 disulfides stabilise this stretch: Cys65/Cys93, Cys67/Cys82, and Cys72/Cys92.

The protein belongs to the alpha-defensin family.

It is found in the secreted. Has antibiotic, anti-fungi and antiviral activity. The chain is Neutrophil cationic peptide 2 from Cavia porcellus (Guinea pig).